The sequence spans 404 residues: Cysteine desulfurase IscS (404 aa).

Pyridoxal 5'-phosphate contacts are provided by residues 75–76 (AT), N155, Q183, and 203–205 (SAH). At K206 the chain carries N6-(pyridoxal phosphate)lysine. T243 serves as a coordination point for pyridoxal 5'-phosphate. The active-site Cysteine persulfide intermediate is the C328. [2Fe-2S] cluster is bound at residue C328.

This sequence belongs to the class-V pyridoxal-phosphate-dependent aminotransferase family. NifS/IscS subfamily. In terms of assembly, homodimer. Forms a heterotetramer with IscU, interacts with other sulfur acceptors. Requires pyridoxal 5'-phosphate as cofactor.

The protein localises to the cytoplasm. The catalysed reaction is (sulfur carrier)-H + L-cysteine = (sulfur carrier)-SH + L-alanine. It participates in cofactor biosynthesis; iron-sulfur cluster biosynthesis. Functionally, master enzyme that delivers sulfur to a number of partners involved in Fe-S cluster assembly, tRNA modification or cofactor biosynthesis. Catalyzes the removal of elemental sulfur atoms from cysteine to produce alanine. Functions as a sulfur delivery protein for Fe-S cluster synthesis onto IscU, an Fe-S scaffold assembly protein, as well as other S acceptor proteins. The protein is Cysteine desulfurase IscS of Aeromonas salmonicida (strain A449).